Here is a 282-residue protein sequence, read N- to C-terminus: Elongation factor Ts (282 aa).

Residues 80–83 (TDFV) are involved in Mg(2+) ion dislocation from EF-Tu.

It belongs to the EF-Ts family.

The protein resides in the cytoplasm. In terms of biological role, associates with the EF-Tu.GDP complex and induces the exchange of GDP to GTP. It remains bound to the aminoacyl-tRNA.EF-Tu.GTP complex up to the GTP hydrolysis stage on the ribosome. This chain is Elongation factor Ts, found in Aliivibrio salmonicida (strain LFI1238) (Vibrio salmonicida (strain LFI1238)).